The chain runs to 120 residues: ATP-dependent Clp protease adapter protein ClpS (120 aa).

The interval 1 to 25 is disordered; the sequence is MHARSEIRLTFNQDRPQSNEDDGSG.

This sequence belongs to the ClpS family. Binds to the N-terminal domain of the chaperone ClpA.

Involved in the modulation of the specificity of the ClpAP-mediated ATP-dependent protein degradation. This chain is ATP-dependent Clp protease adapter protein ClpS, found in Pseudomonas putida (strain W619).